Here is a 197-residue protein sequence, read N- to C-terminus: Probable S-adenosylmethionine-dependent methyltransferase MJ0882 (197 aa).

S-adenosyl-L-methionine-binding positions include 63–67 (GCGYG), Asp-84, and Asn-129. 129–132 (NPPI) is a substrate binding site.

It belongs to the methyltransferase superfamily.

Probable methyltransferase that uses S-adenosylmethionine as the methyl donor. Binds neither NAD nor NADP in vitro. The sequence is that of Probable S-adenosylmethionine-dependent methyltransferase MJ0882 from Methanocaldococcus jannaschii (strain ATCC 43067 / DSM 2661 / JAL-1 / JCM 10045 / NBRC 100440) (Methanococcus jannaschii).